Here is a 353-residue protein sequence, read N- to C-terminus: DNA polymerase IV (353 aa).

One can recognise a UmuC domain in the interval 6 to 187; it reads IIHIDCDCFY…LPVTKLHGVG (182 aa). Mg(2+) contacts are provided by Asp10 and Asp105. Residue Glu106 is part of the active site.

This sequence belongs to the DNA polymerase type-Y family. In terms of assembly, monomer. Mg(2+) serves as cofactor.

The protein resides in the cytoplasm. It catalyses the reaction DNA(n) + a 2'-deoxyribonucleoside 5'-triphosphate = DNA(n+1) + diphosphate. Its function is as follows. Poorly processive, error-prone DNA polymerase involved in untargeted mutagenesis. Copies undamaged DNA at stalled replication forks, which arise in vivo from mismatched or misaligned primer ends. These misaligned primers can be extended by PolIV. Exhibits no 3'-5' exonuclease (proofreading) activity. May be involved in translesional synthesis, in conjunction with the beta clamp from PolIII. This chain is DNA polymerase IV, found in Pseudomonas savastanoi pv. phaseolicola (strain 1448A / Race 6) (Pseudomonas syringae pv. phaseolicola (strain 1448A / Race 6)).